Consider the following 282-residue polypeptide: Acyl-CoA-binding domain-containing protein 6 (282 aa).

Over residues 1–12 (MASSFLPSGATT) the composition is skewed to polar residues. The interval 1 to 34 (MASSFLPSGATTGDSGGELSSGDDSGDVESLQSP) is disordered. A compositionally biased stretch (low complexity) spans 17-31 (GELSSGDDSGDVESL). S41 is subject to Phosphoserine. Residues 42-127 (LPELFEKAAE…VKKLDPSWNP (86 aa)) form the ACB domain. An acyl-CoA-binding positions include 69–73 (YARYK) and K95. Position 106 is a phosphoserine (S106). An acyl-CoA is bound at residue Y114. 2 ANK repeats span residues 191–220 (EGRTLLHWACDRGHKELVTVLLQYRADINC) and 224–253 (EGQTALHYAAACEFLDIVELLLQSGADPTL).

Monomer.

Its subcellular location is the cytoplasm. In terms of biological role, binds long-chain acyl-coenzyme A molecules with a strong preference for unsaturated C18:1-CoA, lower affinity for unsaturated C20:4-CoA, and very weak affinity for saturated C16:0-CoA. Does not bind fatty acids. The protein is Acyl-CoA-binding domain-containing protein 6 (ACBD6) of Bos taurus (Bovine).